The sequence spans 290 residues: NAD kinase (290 aa).

Aspartate 72 functions as the Proton acceptor in the catalytic mechanism. NAD(+)-binding positions include 72–73 (DG), 146–147 (NE), arginine 174, aspartate 176, and 187–192 (TAYALS).

It belongs to the NAD kinase family. A divalent metal cation is required as a cofactor.

It is found in the cytoplasm. The catalysed reaction is NAD(+) + ATP = ADP + NADP(+) + H(+). Functionally, involved in the regulation of the intracellular balance of NAD and NADP, and is a key enzyme in the biosynthesis of NADP. Catalyzes specifically the phosphorylation on 2'-hydroxyl of the adenosine moiety of NAD to yield NADP. This chain is NAD kinase, found in Methylococcus capsulatus (strain ATCC 33009 / NCIMB 11132 / Bath).